Consider the following 476-residue polypeptide: tRNA(Ile)-lysidine synthase (476 aa).

30 to 35 (SGGPDS) is an ATP binding site.

Belongs to the tRNA(Ile)-lysidine synthase family.

Its subcellular location is the cytoplasm. The enzyme catalyses cytidine(34) in tRNA(Ile2) + L-lysine + ATP = lysidine(34) in tRNA(Ile2) + AMP + diphosphate + H(+). In terms of biological role, ligates lysine onto the cytidine present at position 34 of the AUA codon-specific tRNA(Ile) that contains the anticodon CAU, in an ATP-dependent manner. Cytidine is converted to lysidine, thus changing the amino acid specificity of the tRNA from methionine to isoleucine. In Bacillus cereus (strain ATCC 14579 / DSM 31 / CCUG 7414 / JCM 2152 / NBRC 15305 / NCIMB 9373 / NCTC 2599 / NRRL B-3711), this protein is tRNA(Ile)-lysidine synthase.